We begin with the raw amino-acid sequence, 1527 residues long: ATP-binding cassette sub-family C member 3 (1527 aa).

Residues 1-32 (MDALCGSGELGSKFWDSNLSVHTENPDLTPCF) lie on the Extracellular side of the membrane. N-linked (GlcNAc...) asparagine glycosylation is present at asparagine 18. A helical membrane pass occupies residues 33 to 53 (QNSLLAWVPCIYLWVALPCYL). At 54 to 73 (LYLRHHCRGYIILSHLSKLK) the chain is on the cytoplasmic side. The helical transmembrane segment at 74–94 (MVLGVLLWCVSWADLFYSFHG) threads the bilayer. Residues 95–99 (LVHGR) lie on the Extracellular side of the membrane. Residues 100–120 (APAPVFFVTPLVVGVTMLLAT) form a helical membrane-spanning segment. The Cytoplasmic portion of the chain corresponds to 121–132 (LLIQYERLQGVQ). Residues 133-153 (SSGVLIIFWFLCVVCAIVPFR) traverse the membrane as a helical segment. Residues 154-171 (SKILLAKAEGEISDPFRF) are Extracellular-facing. Residues 172 to 192 (TTFYIHFALVLSALILACFRE) form a helical membrane-spanning segment. Residues 193–302 (KPPFFSAKNV…RPRKPSFLKA (110 aa)) are Cytoplasmic-facing. A helical membrane pass occupies residues 303–323 (LLATFGSSFLISACFKLIQDL). An ABC transmembrane type-1 1 domain is found at 311 to 594 (FLISACFKLI…LPQLISNLTQ (284 aa)). Over 324–349 (LSFINPQLLSILIRFISNPMAPSWWG) the chain is Extracellular. Residues 350–370 (FLVAGLMFLCSMMQSLILQHY) traverse the membrane as a helical segment. The Cytoplasmic segment spans residues 371–426 (YHYIFVTGVKFRTGIMGVIYRKALVITNSVKRASTVGEIVNLMSVDAQRFMDLAPF). The chain crosses the membrane as a helical span at residues 427-447 (LNLLWSAPLQIILAIYFLWQN). Residues 448 to 450 (LGP) lie on the Extracellular side of the membrane. The helical transmembrane segment at 451-471 (SVLAGVAFMVLLIPLNGAVAV) threads the bilayer. Residues 472–533 (KMRAFQVKQM…LLRTAAYLHT (62 aa)) are Cytoplasmic-facing. A helical membrane pass occupies residues 534-554 (TTTFTWMCSPFLVTLITLWVY). Residues 555-576 (VYVDPNNVLDAEKAFVSVSLFN) lie on the Extracellular side of the membrane. The chain crosses the membrane as a helical span at residues 577–597 (ILRLPLNMLPQLISNLTQASV). Topologically, residues 598–963 (SLKRIQQFLS…VELSVFWDYA (366 aa)) are cytoplasmic. An ABC transporter 1 domain is found at 629 to 851 (IHSGTFTWAQ…NGSFANFLCN (223 aa)). 661–668 (GPVGCGKS) is an ATP binding site. Phosphoserine is present on residues serine 908 and serine 911. A disordered region spans residues 910–932 (LSSDGEGQGRPVPRRHLGPSEKV). A helical transmembrane segment spans residues 964-984 (KAVGLCTTLAICLLYVGQSAA). One can recognise an ABC transmembrane type-1 2 domain in the interval 971–1252 (TLAICLLYVG…MIRMMSDLES (282 aa)). The Extracellular segment spans residues 985 to 1021 (AIGANVWLSAWTNDAMADSRQNNTSLRLGVYAALGIL). N-linked (GlcNAc...) asparagine glycans are attached at residues asparagine 1006 and asparagine 1007. Residues 1022-1042 (QGFLVMLAAMAMAAGGIQAAR) traverse the membrane as a helical segment. At 1043-1085 (VLHQALLHNKIRSPQSFFDTTPSGRILNCFSKDIYVVDEVLAP) the chain is on the cytoplasmic side. Residues 1086–1106 (VILMLLNSFFNAISTLVVIMA) traverse the membrane as a helical segment. Position 1107 (serine 1107) is a topological domain, extracellular. Residues 1108–1128 (TPLFTVVILPLAVLYTLVQRF) form a helical membrane-spanning segment. The Cytoplasmic segment spans residues 1129–1199 (YAATSRQLKR…ISNRWLSIGV (71 aa)). A helical membrane pass occupies residues 1200–1220 (EFVGNCVVLFAALFAVIGRSS). Residues 1221-1222 (LN) lie on the Extracellular side of the membrane. Residues 1223 to 1243 (PGLVGLSVSYSLQVTFALNWM) traverse the membrane as a helical segment. Over 1244–1527 (IRMMSDLESN…YGMARDAGLA (284 aa)) the chain is Cytoplasmic. An ABC transporter 2 domain is found at 1291-1523 (FRNYSVRYRP…RGIFYGMARD (233 aa)). ATP is bound at residue 1323–1330 (GRTGAGKS).

It belongs to the ABC transporter superfamily. ABCC family. Conjugate transporter (TC 3.A.1.208) subfamily. Mainly expressed in the liver. Also expressed in small intestine, colon, prostate, testis, brain and at a lower level in the kidney. In testis, localized to peritubular myoid cells, Leydig cells, along the basal membrane of Sertoli cells and moderately in the adluminal compartment of the seminiferous tubules.

The protein localises to the basolateral cell membrane. Its subcellular location is the basal cell membrane. It carries out the reaction taurocholate(in) + ATP + H2O = taurocholate(out) + ADP + phosphate + H(+). It catalyses the reaction glycocholate(in) + ATP + H2O = glycocholate(out) + ADP + phosphate + H(+). The catalysed reaction is taurolithocholate 3-sulfate(in) + ATP + H2O = taurolithocholate 3-sulfate(out) + ADP + phosphate + H(+). The enzyme catalyses taurochenodeoxycholate 3-sulfate(in) + ATP + H2O = taurochenodeoxycholate 3-sulfate(out) + ADP + phosphate + H(+). It carries out the reaction an S-substituted glutathione(in) + ATP + H2O = an S-substituted glutathione(out) + ADP + phosphate + H(+). It catalyses the reaction ATP + H2O + xenobioticSide 1 = ADP + phosphate + xenobioticSide 2.. The catalysed reaction is 17beta-estradiol 17-O-(beta-D-glucuronate)(in) + ATP + H2O = 17beta-estradiol 17-O-(beta-D-glucuronate)(out) + ADP + phosphate + H(+). The enzyme catalyses dehydroepiandrosterone 3-sulfate(in) + ATP + H2O = dehydroepiandrosterone 3-sulfate(out) + ADP + phosphate + H(+). It carries out the reaction leukotriene C4(in) + ATP + H2O = leukotriene C4(out) + ADP + phosphate + H(+). It catalyses the reaction (4Z,15Z)-bilirubin IXalpha C8-beta-D-glucuronoside(in) + ATP + H2O = (4Z,15Z)-bilirubin IXalpha C8-beta-D-glucuronoside(out) + ADP + phosphate + H(+). The catalysed reaction is (4Z,15Z)-bilirubin IXalpha C8,C12-beta-D-bisglucuronoside(in) + ATP + H2O = (4Z,15Z)-bilirubin IXalpha C8,C12-beta-D-bisglucuronoside(out) + ADP + phosphate + H(+). ATP-dependent transporter of the ATP-binding cassette (ABC) family that binds and hydrolyzes ATP to enable active transport of various substrates including many drugs, toxicants and endogenous compound across cell membranes. Transports glucuronide conjugates such as bilirubin diglucuronide, estradiol-17-beta-o-glucuronide and GSH conjugates such as leukotriene C4 (LTC4). Transports also various bile salts (taurocholate, glycocholate, taurochenodeoxycholate-3-sulfate, taurolithocholate- 3-sulfate). Does not contribute substantially to bile salt physiology but provides an alternative route for the export of bile acids and glucuronides from cholestatic hepatocytes. May contribute to regulate the transport of organic compounds in testes across the blood-testis-barrier. Can confer resistance to various anticancer drugs, methotrexate, tenoposide and etoposide, by decreasing accumulation of these drugs in cells. In Homo sapiens (Human), this protein is ATP-binding cassette sub-family C member 3.